Consider the following 313-residue polypeptide: uncharacterized protein (313 aa).

The protein to B.subtilis YqxC and T.hyodysenteriae hemolysin TlyA.

This is an uncharacterized protein from Bacillus subtilis (strain 168).